The primary structure comprises 510 residues: Peroxidase 2 (510 aa).

A signal peptide spans 1-19 (MRLTYLPLFAGIAIQSASA). The propeptide occupies 20-58 (LPDFFKSSVLKPRRTNSLLINPDAQPDLPTAQQASTAAA). Asp228 acts as the Proton acceptor in catalysis. His362 serves as a coordination point for heme.

Homodimer. The cofactor is heme b.

Functionally, peroxidase capable of degrading beta-carotene. The sequence is that of Peroxidase 2 from Mycetinis scorodonius (Garlic mushroom).